The following is a 183-amino-acid chain: Ferritin heavy chain (183 aa).

M1 carries the N-acetylmethionine modification. T2 bears the N-acetylthreonine; in Ferritin heavy chain, N-terminally processed mark. Positions Q11–G160 constitute a Ferritin-like diiron domain. Residues E28, E63, H66, E108, and Q142 each contribute to the Fe cation site. Phosphoserine occurs at positions 179 and 183.

It belongs to the ferritin family. In terms of assembly, oligomer of 24 subunits. There are two types of subunits: L (light) chain and H (heavy) chain. The major chain can be light or heavy, depending on the species and tissue type. The functional molecule forms a roughly spherical shell with a diameter of 12 nm and contains a central cavity into which the insoluble mineral iron core is deposited. Interacts with NCOA4; NCOA4 promotes targeting of the iron-binding ferritin complex to autolysosomes following starvation or iron depletion.

The protein localises to the cytoplasm. It is found in the lysosome. Its subcellular location is the cytoplasmic vesicle. It localises to the autophagosome. It carries out the reaction 4 Fe(2+) + O2 + 4 H(+) = 4 Fe(3+) + 2 H2O. Functionally, stores iron in a soluble, non-toxic, readily available form. Important for iron homeostasis. Has ferroxidase activity. Iron is taken up in the ferrous form and deposited as ferric hydroxides after oxidation. Also plays a role in delivery of iron to cells. Mediates iron uptake in capsule cells of the developing kidney. Delivery to lysosomes is mediated by the cargo receptor NCOA4 for autophagic degradation and release of iron. In Felis catus (Cat), this protein is Ferritin heavy chain (FTH1).